Here is a 323-residue protein sequence, read N- to C-terminus: Aquaporin NIP3-1 (323 aa).

M1 is subject to N-acetylmethionine. 2 helical membrane passes run 45 to 65 (LIGE…AIVV) and 73 to 93 (VTLP…IYSI). The NPA 1 motif lies at 102–104 (NPA). 3 helical membrane passes run 122 to 142 (GYIA…RLVF), 167 to 187 (TSFV…SAVA), and 196 to 216 (FAGI…GPIS). The NPA 2 motif lies at 221-223 (NPA). Residues 239–259 (WLYIVSPVIGALSGAWTYGLL) traverse the membrane as a helical segment.

Belongs to the MIP/aquaporin (TC 1.A.8) family. NIP (TC 1.A.8.12) subfamily.

The protein resides in the membrane. Its function is as follows. Aquaporins facilitate the transport of water and small neutral solutes across cell membranes. In Arabidopsis thaliana (Mouse-ear cress), this protein is Aquaporin NIP3-1 (NIP3-1).